The following is a 764-amino-acid chain: FAST kinase domain-containing protein 5, mitochondrial (764 aa).

The N-terminal 27 residues, 1–27 (MAATLKSLKLVRYRAFCSPSAFGAVRS), are a transit peptide targeting the mitochondrion. Residue serine 95 is modified to Phosphoserine. Lysine 507 carries the N6-acetyllysine modification. Residues 697–757 (LAVQFTNRNQ…RLEKLAFLHE (61 aa)) form the RAP domain.

Belongs to the FAST kinase family. As to quaternary structure, found in a complex with GRSF1, DDX28, DHX30 and FASTKD2. Associates with the 12S mitochondrial rRNA (12S mt-rRNA). In terms of tissue distribution, expression detected in spleen, thymus, testis, ovary, colon, heart, smooth muscle, kidney, brain, lung, liver and white adipose tissue with highest expression in heart, smooth muscle, liver and thyroid.

The protein resides in the mitochondrion matrix. The protein localises to the mitochondrion nucleoid. Functionally, plays an important role in the processing of non-canonical mitochondrial mRNA precursors. The sequence is that of FAST kinase domain-containing protein 5, mitochondrial (FASTKD5) from Homo sapiens (Human).